The primary structure comprises 128 residues: Large ribosomal subunit protein bL19 (128 aa).

The protein belongs to the bacterial ribosomal protein bL19 family.

Its function is as follows. This protein is located at the 30S-50S ribosomal subunit interface and may play a role in the structure and function of the aminoacyl-tRNA binding site. In Paraburkholderia xenovorans (strain LB400), this protein is Large ribosomal subunit protein bL19.